The following is a 258-amino-acid chain: Putative cysteine-rich repeat secretory protein 35 (258 aa).

The N-terminal stretch at 1–29 (MYSSYSLSKRLIYVPILAIQFLLVRSVSS) is a signal peptide. Gnk2-homologous domains lie at 36–138 (YLNH…TIKP) and 146–255 (FKNT…LYPF).

The protein belongs to the cysteine-rich repeat secretory protein family.

It is found in the secreted. The polypeptide is Putative cysteine-rich repeat secretory protein 35 (CRRSP35) (Arabidopsis thaliana (Mouse-ear cress)).